Consider the following 202-residue polypeptide: Matrix protein (202 aa).

The segment at 14 to 33 (EDTQKPSPASAPPDGDDLWL) is disordered. The PPXY motif signature appears at 35-38 (PPEY). Positions 115 to 151 (KLRRTLIFQWADSRGPLEGEELEHSQEITWDDDTEFV) are essential for glycoprotein binding.

The protein belongs to the lyssavirus matrix protein family. In terms of assembly, homomultimer. Interacts with nucleoprotein and with the cytoplasmic domain of glycoprotein. Interacts with host ATP6V1A; this interaction plays an important role in virion uncoating after viral entry.

The protein localises to the virion membrane. The protein resides in the host endomembrane system. It localises to the host cytoplasm. Plays a major role in assembly, budding and uncoating of virion after membrane fusion. Completely covers the ribonucleoprotein coil and keep it in condensed bullet-shaped form. Inhibits viral transcription and stimulates replication. Plays a major role in early induction of TRAIL-mediated apoptosis in infected neurons. Inhibits the integrated stress response (ISR) in the infected cell by blocking the formation of stress granules. The sequence is that of Matrix protein (M) from Rabies virus (strain HEP-Flury) (RABV).